Reading from the N-terminus, the 903-residue chain is DNA mismatch repair protein MutS (903 aa).

The interval 1–89 (MPRSASQPPD…DEPAWGHHSQ (89 aa)) is disordered. Composition is skewed to low complexity over residues 20 to 36 (APEPAAPSATATASEPE) and 49 to 62 (ADAAARPRTRQATA). 719-726 (GPNASGKS) contributes to the ATP binding site.

This sequence belongs to the DNA mismatch repair MutS family.

Its function is as follows. This protein is involved in the repair of mismatches in DNA. It is possible that it carries out the mismatch recognition step. This protein has a weak ATPase activity. The polypeptide is DNA mismatch repair protein MutS (Synechococcus sp. (strain CC9605)).